Here is a 1333-residue protein sequence, read N- to C-terminus: Cell division control protein 25 (1333 aa).

Positions 1-27 (MSSANYISDEVPPDMVSPHDHRPSKDE) are disordered. Positions 17 to 27 (SPHDHRPSKDE) are enriched in basic and acidic residues. Residues 30-94 (KHLDTVIALY…PHNYVRSVNY (65 aa)) form the SH3 domain. The segment covering 133-166 (LQESERNSPANSTRKNSVVSFASSETSMPSDSKY) has biased composition (polar residues). Disordered regions lie at residues 133–206 (LQES…SSIS) and 474–497 (SSAFQSPASSLSTIRQGSDDSTRF). A compositionally biased stretch (low complexity) spans 167–176 (TQQQTNTNQN). 2 stretches are compositionally biased toward polar residues: residues 177 to 187 (SPEYQSISLPS) and 194 to 206 (VEMQLPSQQSSIS). Residues 474-485 (SSAFQSPASSLS) show a composition bias toward low complexity. An N-terminal Ras-GEF domain is found at 900–1034 (VKGNIKGGSK…YLERLLRGER (135 aa)). One can recognise a Ras-GEF domain in the interval 1068 to 1305 (DYVELARQLT…YQISLNLEPR (238 aa)).

Functionally, promotes the exchange of Ras-bound GDP by GTP. This protein positively controls the level of cellular cAMP at start, the stage at which the yeast cell division cycle is triggered. The polypeptide is Cell division control protein 25 (CDC25) (Candida albicans (strain SC5314 / ATCC MYA-2876) (Yeast)).